The primary structure comprises 90 residues: Cell division topological specificity factor (90 aa).

Belongs to the MinE family.

Its function is as follows. Prevents the cell division inhibition by proteins MinC and MinD at internal division sites while permitting inhibition at polar sites. This ensures cell division at the proper site by restricting the formation of a division septum at the midpoint of the long axis of the cell. This chain is Cell division topological specificity factor, found in Clostridium perfringens (strain ATCC 13124 / DSM 756 / JCM 1290 / NCIMB 6125 / NCTC 8237 / Type A).